The primary structure comprises 57 residues: UPF0391 membrane protein IL0696 (57 aa).

The next 2 helical transmembrane spans lie at 4–24 (WVLI…GGIA) and 28–48 (AGIA…SLVV).

The protein belongs to the UPF0391 family.

Its subcellular location is the cell membrane. This is UPF0391 membrane protein IL0696 from Idiomarina loihiensis (strain ATCC BAA-735 / DSM 15497 / L2-TR).